The sequence spans 82 residues: U6 snRNA-associated Sm-like protein LSm6 (82 aa).

In terms of domain architecture, Sm spans 13-82 (DPSGFLSEII…GNNVMYISAD (70 aa)).

Belongs to the snRNP Sm proteins family. SmF/LSm6 subfamily. In terms of assembly, component of the heptameric LSM1-LSM7 complex, which consists of snr-1/lsm1, snr-2/lsm2, snr-3/lsm3, snr-4/lsm4, snr-5/lsm5, snr-6/lsm6 and snr-7/lsm7. Component of the heptameric LSM2-LSM8 complex, which consists of snr-2/lsm2, snr-3/lsm3, snr-4/lsm4, snr-5/lsm5, snr-6/lsm6, snr-7/lsm7 and snr-8/lsm8. The LSm subunits form a seven-membered ring structure with a doughnut shape.

It is found in the cytoplasm. Its subcellular location is the nucleus. Its function is as follows. Component of LSm protein complexes, which are involved in RNA processing and may function in a chaperone-like manner, facilitating the efficient association of RNA processing factors with their substrates. Component of the cytoplasmic LSM1-LSM7 complex, which is thought to be involved in mRNA degradation by activating the decapping step in the 5'-to-3' mRNA decay pathway. Component of the nuclear LSM2-LSM8 complex, which is involved in splicing of nuclear mRNAs. LSM2-LSM8 associates with multiple snRNP complexes containing the U6 snRNA (U4/U6 di-snRNP, spliceosomal U4/U6.U5 tri-snRNP, and free U6 snRNP). It binds directly to the 3'-terminal U-tract of U6 snRNA and plays a role in the biogenesis and stability of the U6 snRNP and U4/U6 snRNP complexes. LSM2-LSM8 probably also is involved degradation of nuclear pre-mRNA by targeting them for decapping, and in processing of pre-tRNAs, pre-rRNAs and U3 snoRNA. In Neurospora crassa (strain ATCC 24698 / 74-OR23-1A / CBS 708.71 / DSM 1257 / FGSC 987), this protein is U6 snRNA-associated Sm-like protein LSm6 (snr-6).